Here is a 184-residue protein sequence, read N- to C-terminus: Inactive ribonuclease-like protein 9 (184 aa).

The N-terminal stretch at M1–Q25 is a signal peptide. 3 disulfides stabilise this stretch: C93/C148, C111/C163, and C118/C125. 2 N-linked (GlcNAc...) asparagine glycosylation sites follow: N147 and N179.

It belongs to the pancreatic ribonuclease family.

The protein resides in the secreted. In terms of biological role, does not exhibit any ribonuclease activity. The sequence is that of Inactive ribonuclease-like protein 9 (Rnase9) from Mus musculus (Mouse).